Consider the following 259-residue polypeptide: 5'-nucleotidase SurE (259 aa).

4 residues coordinate a divalent metal cation: aspartate 8, aspartate 9, serine 40, and asparagine 92.

It belongs to the SurE nucleotidase family. A divalent metal cation serves as cofactor.

The protein resides in the cytoplasm. The enzyme catalyses a ribonucleoside 5'-phosphate + H2O = a ribonucleoside + phosphate. Its function is as follows. Nucleotidase that shows phosphatase activity on nucleoside 5'-monophosphates. This Xanthomonas campestris pv. campestris (strain 8004) protein is 5'-nucleotidase SurE.